We begin with the raw amino-acid sequence, 802 residues long: Phenylalanine--tRNA ligase beta subunit (802 aa).

Positions 40–155 (SASLKNVVVG…EHVETGVSAI (116 aa)) constitute a tRNA-binding domain. In terms of domain architecture, B5 spans 409 to 484 (KAVNKIETSL…RIYGYDEIPV (76 aa)). Mg(2+) is bound by residues Asp462, Asp468, Glu471, and Glu472. The 94-residue stretch at 709 to 802 (PRYPEMTRDL…LQAKLHAIIR (94 aa)) folds into the FDX-ACB domain.

Belongs to the phenylalanyl-tRNA synthetase beta subunit family. Type 1 subfamily. Tetramer of two alpha and two beta subunits. It depends on Mg(2+) as a cofactor.

It localises to the cytoplasm. It carries out the reaction tRNA(Phe) + L-phenylalanine + ATP = L-phenylalanyl-tRNA(Phe) + AMP + diphosphate + H(+). This Listeria innocua serovar 6a (strain ATCC BAA-680 / CLIP 11262) protein is Phenylalanine--tRNA ligase beta subunit.